The primary structure comprises 418 residues: NADH-quinone oxidoreductase subunit D (418 aa).

The protein belongs to the complex I 49 kDa subunit family. In terms of assembly, NDH-1 is composed of 14 different subunits. Subunits NuoB, C, D, E, F, and G constitute the peripheral sector of the complex.

It localises to the cell inner membrane. The catalysed reaction is a quinone + NADH + 5 H(+)(in) = a quinol + NAD(+) + 4 H(+)(out). Functionally, NDH-1 shuttles electrons from NADH, via FMN and iron-sulfur (Fe-S) centers, to quinones in the respiratory chain. The immediate electron acceptor for the enzyme in this species is believed to be ubiquinone. Couples the redox reaction to proton translocation (for every two electrons transferred, four hydrogen ions are translocated across the cytoplasmic membrane), and thus conserves the redox energy in a proton gradient. This is NADH-quinone oxidoreductase subunit D from Neisseria meningitidis serogroup C (strain 053442).